The primary structure comprises 320 residues: Ferrochelatase (320 aa).

2 residues coordinate Fe cation: His194 and Glu275.

The protein belongs to the ferrochelatase family.

It localises to the cytoplasm. The catalysed reaction is heme b + 2 H(+) = protoporphyrin IX + Fe(2+). It participates in porphyrin-containing compound metabolism; protoheme biosynthesis; protoheme from protoporphyrin-IX: step 1/1. Functionally, catalyzes the ferrous insertion into protoporphyrin IX. In Vibrio parahaemolyticus serotype O3:K6 (strain RIMD 2210633), this protein is Ferrochelatase.